Consider the following 83-residue polypeptide: Small ribosomal subunit protein bS16 (83 aa).

It belongs to the bacterial ribosomal protein bS16 family.

The chain is Small ribosomal subunit protein bS16 from Shewanella putrefaciens (strain CN-32 / ATCC BAA-453).